Here is a 635-residue protein sequence, read N- to C-terminus: MIKITLKDGKVMEFEEGIKISDIAMKISPALYKKALAAKIDGETVDLMTELHKDSSLEILTFEDEMGKWALRHTGSHMLAQAVKRLYPEVKLAIGPAIDTGFYYDFEADFTFTPEMLEKIEAEIKKIIKENHKLERFELPREEAIKLMKEKNEDYKVELIEDLPEGEVISFYKQGDFTDLCAGPHVPSTGKVKSVKLLSLAGAYWRGDENNKMLQRIYGTAFTKKSELDEYLNMIEEAKKRDHRKLGKELDLFSIHEEGPGFPFFHPKGMIVRNILESFWREEHTKAGYQEIRTPLILNEALWHQSGHWDHYKENMYFTNIDDDDYAIKPMNCPGGILVYKNSMHSYRDLPLRLSELGIVHRHELSGALHGLMRVRCFTQDDAHLYMTKEQIKEEVVGIIKLIDKFYKLFGFEYFVELSTRPEDSMGSDEDWEIATNGLREALDSIGKEYRVNEGDGAFYGPKIDFHLKDCIGRTWQCGTIQLDFQMPERFDLSYIGADGEKHRPVMVHRTIYGSVERFIGILIEQYAGAFPTWLAPVQVKLMNITDSQYDYLKKVEEALKENNIRVEIDTRNEKIGYKIREAQLQKVPYMLILGDKEVEAGKVAVRSRKDGDLGAISLEEFIEKIKNEIKNKTN.

The region spanning 1–61 is the TGS domain; it reads MIKITLKDGK…HKDSSLEILT (61 aa). Residues 242 to 532 are catalytic; it reads DHRKLGKELD…LIEQYAGAFP (291 aa). C333, H384, and H509 together coordinate Zn(2+).

This sequence belongs to the class-II aminoacyl-tRNA synthetase family. Homodimer. The cofactor is Zn(2+).

It is found in the cytoplasm. The catalysed reaction is tRNA(Thr) + L-threonine + ATP = L-threonyl-tRNA(Thr) + AMP + diphosphate + H(+). Catalyzes the attachment of threonine to tRNA(Thr) in a two-step reaction: L-threonine is first activated by ATP to form Thr-AMP and then transferred to the acceptor end of tRNA(Thr). Also edits incorrectly charged L-seryl-tRNA(Thr). The sequence is that of Threonine--tRNA ligase from Clostridium botulinum (strain ATCC 19397 / Type A).